The primary structure comprises 437 residues: Probable peptidoglycan-N-acetylglucosamine deacetylase ARB_03699 (437 aa).

The signal sequence occupies residues 1–20; that stretch reads MLMRLYTFFAAALLACCAAA. Positions 47–132 are disordered; that stretch reads STRAATTTTT…STSAAAPSTP (86 aa). The N-linked (GlcNAc...) asparagine glycan is linked to asparagine 99. In terms of domain architecture, NodB homology spans 149-334; that stretch reads GTVAITFDDG…EVKRRGLKAV (186 aa). The active-site Proton acceptor is aspartate 156. Residues aspartate 157, histidine 209, and histidine 213 each coordinate Zn(2+). Tyrosine 251 contributes to the substrate binding site. Histidine 308 acts as the Proton donor in catalysis. A compositionally biased stretch (low complexity) spans 350–370; sequence TTPVQVPTGTSTTSPTATPTS. The tract at residues 350–384 is disordered; the sequence is TTPVQVPTGTSTTSPTATPTSPGTPPPAPTQPGVA. Residues 389 to 435 enclose the LysM domain; the sequence is KWHTVVSGDTCYDIAAANGISLDNLYKWNPAVGTSCASLWLGYAVCV.

Zn(2+) serves as cofactor. Co(2+) is required as a cofactor.

It is found in the secreted. The catalysed reaction is peptidoglycan-N-acetyl-D-glucosamine + H2O = peptidoglycan-D-glucosamine + acetate.. Its function is as follows. Catalyzes the deacetylation of N-acetylglucosamine (GlcNAc) residues in peptidoglycan. This is Probable peptidoglycan-N-acetylglucosamine deacetylase ARB_03699 from Arthroderma benhamiae (strain ATCC MYA-4681 / CBS 112371) (Trichophyton mentagrophytes).